We begin with the raw amino-acid sequence, 109 residues long: Small ribosomal subunit protein bS6c (109 aa).

It belongs to the bacterial ribosomal protein bS6 family.

It is found in the plastid. The protein localises to the chloroplast. Its function is as follows. Binds together with bS18 to 16S ribosomal RNA. The protein is Small ribosomal subunit protein bS6c of Pyropia yezoensis (Susabi-nori).